A 345-amino-acid chain; its full sequence is Anthranilate phosphoribosyltransferase (345 aa).

Residues 77-79, 82-83, T87, 89-92, 106-114, and S118 each bind 5-phospho-alpha-D-ribose 1-diphosphate; these read TAG, GD, NVST, and KHGNRAVSG. G79 provides a ligand contact to anthranilate. S91 is a Mg(2+) binding site. N109 is a binding site for anthranilate. R164 is an anthranilate binding site. Residues D223 and E224 each coordinate Mg(2+).

It belongs to the anthranilate phosphoribosyltransferase family. As to quaternary structure, homodimer. The cofactor is Mg(2+).

It carries out the reaction N-(5-phospho-beta-D-ribosyl)anthranilate + diphosphate = 5-phospho-alpha-D-ribose 1-diphosphate + anthranilate. Its pathway is amino-acid biosynthesis; L-tryptophan biosynthesis; L-tryptophan from chorismate: step 2/5. In terms of biological role, catalyzes the transfer of the phosphoribosyl group of 5-phosphorylribose-1-pyrophosphate (PRPP) to anthranilate to yield N-(5'-phosphoribosyl)-anthranilate (PRA). The sequence is that of Anthranilate phosphoribosyltransferase from Saccharolobus solfataricus (strain ATCC 35092 / DSM 1617 / JCM 11322 / P2) (Sulfolobus solfataricus).